Here is a 1203-residue protein sequence, read N- to C-terminus: Delphilin (1203 aa).

The region spanning Met-1 to Gly-79 is the PDZ 1 domain. Ala-3 carries S-palmitoyl cysteine lipidation. Residues Gly-215–Arg-270 are disordered. A compositionally biased stretch (low complexity) spans Leu-231–Pro-241. Residues Thr-268–Pro-345 form the PDZ 2 domain. Ser-303 bears the Phosphoserine mark. 4 disordered regions span residues Glu-466–Pro-541, Ile-563–Thr-586, Leu-611–Arg-656, and Ser-710–Ser-821. Positions Arg-500–Ser-509 are enriched in polar residues. Phosphoserine is present on residues Ser-572, Ser-613, Ser-644, and Ser-647. Over residues Leu-611–Leu-625 the composition is skewed to low complexity. A compositionally biased stretch (low complexity) spans Glu-715–His-740. Over residues Ile-741–Phe-756 the composition is skewed to pro residues. Positions Gln-774–Asn-784 are enriched in polar residues. Residues Pro-786–Pro-803 are compositionally biased toward pro residues. An FH2 domain is found at His-812–Trp-1203.

In terms of assembly, interacts with C-terminus of the glutamate receptor GRID2 via PDZ domain. Isoform 2 also interacts with Profilin-2/PFN2 and with the monocarboxylate transporter SLC16A7 via PDZ domain. The interaction of isoform 2 with GRID2 is dependent on GRID2 phosphorylation by PKA. In terms of processing, isoform 2 is palmitoylated. Palmitoylation of isoform 2 is necessary for the enhanced cell surface expression of GRID2, and is also responsible for the accumulation of isoform 2 within dendritic spines. Isoform 1 and isoform 2 are differentially localized, probably modulating GRID2 signaling in neurons. As to expression, isoform 1 is expressed in the cerebellum, but not in the cerebral cortex. Isoform 2 is expressed in the cell body of purkinge cells of the cerebellum and weakly expressed in the cerebrum and the brainstem as well as various nuclei of the thalamus. Isoform 2 is highly expressed in the cerebral cortex than in the cerebellum. Isoform 3 is expressed in the cerebellum and cerebrum.

The protein resides in the postsynaptic cell membrane. It is found in the cell projection. Its subcellular location is the dendritic spine. The protein localises to the synapse. It localises to the cell membrane. In terms of biological role, postsynaptic scaffolding protein at the Purkinje cell synapse, where it may serve to link GRID2 with actin cytoskeleton and various signaling molecules. In Mus musculus (Mouse), this protein is Delphilin (Grid2ip).